The following is a 102-amino-acid chain: Keratinocyte differentiation-associated protein (102 aa).

The first 22 residues, 1–22 (MKIPILPVVALLSLLALHAVQG), serve as a signal peptide directing secretion.

Expression restricted to suprabasal keratinocytes of the epidermis.

The protein resides in the secreted. Functionally, may act as a soluble regulator of keratinocyte differentiation. May play an important role in embryonic skin morphogenesis. The sequence is that of Keratinocyte differentiation-associated protein from Mus musculus (Mouse).